We begin with the raw amino-acid sequence, 160 residues long: Transcription antitermination protein NusB (160 aa).

This sequence belongs to the NusB family.

Involved in transcription antitermination. Required for transcription of ribosomal RNA (rRNA) genes. Binds specifically to the boxA antiterminator sequence of the ribosomal RNA (rrn) operons. This Nitrobacter hamburgensis (strain DSM 10229 / NCIMB 13809 / X14) protein is Transcription antitermination protein NusB.